We begin with the raw amino-acid sequence, 123 residues long: Class I hydrophobin 2 (123 aa).

The N-terminal stretch at 1 to 16 (MYAYTVIAFLAASVAA) is a signal peptide. 4 disulfide bridges follow: cysteine 35/cysteine 97, cysteine 43/cysteine 91, cysteine 44/cysteine 72, and cysteine 98/cysteine 116.

The protein belongs to the fungal hydrophobin family.

The protein resides in the secreted. It is found in the cell wall. Its function is as follows. Aerial growth, conidiation, and dispersal of filamentous fungi in the environment rely upon a capability of their secreting small amphipathic proteins called hydrophobins (HPBs) with low sequence identity. Class I can self-assemble into an outermost layer of rodlet bundles on aerial cell surfaces, conferring cellular hydrophobicity that supports fungal growth, development and dispersal; whereas Class II form highly ordered films at water-air interfaces through intermolecular interactions but contribute nothing to the rodlet structure. HYD1 and HYD2 are required for the structural integrity of the long aerial chains of microconidia. Does not seem to be important for the ability to cause seedling disease. The chain is Class I hydrophobin 2 from Gibberella moniliformis (Maize ear and stalk rot fungus).